We begin with the raw amino-acid sequence, 61 residues long: Small ribosomal subunit protein uS14 (61 aa).

4 residues coordinate Zn(2+): Cys-24, Cys-27, Cys-40, and Cys-43.

Belongs to the universal ribosomal protein uS14 family. Zinc-binding uS14 subfamily. In terms of assembly, part of the 30S ribosomal subunit. Contacts proteins S3 and S10. It depends on Zn(2+) as a cofactor.

Its function is as follows. Binds 16S rRNA, required for the assembly of 30S particles and may also be responsible for determining the conformation of the 16S rRNA at the A site. The chain is Small ribosomal subunit protein uS14 from Mycoplasma genitalium (strain ATCC 33530 / DSM 19775 / NCTC 10195 / G37) (Mycoplasmoides genitalium).